The primary structure comprises 253 residues: HTH-type transcriptional regulator AdiY (253 aa).

The region spanning 149 to 246 is the HTH araC/xylS-type domain; that stretch reads DSVYQIIESD…GMTPLHYVSQ (98 aa). 2 consecutive DNA-binding regions (H-T-H motif) follow at residues 166–187 and 213–236; these read SMVASCLCLSPSLLKKKLKSEN and ISQVSQSCGYNSTSYFISVFKDFY.

The chain is HTH-type transcriptional regulator AdiY (adiY) from Escherichia coli (strain K12).